A 507-amino-acid chain; its full sequence is Histidine ammonia-lyase (507 aa).

Positions 141 to 143 form a cross-link, 5-imidazolinone (Ala-Gly); it reads ASG. 2,3-didehydroalanine (Ser) is present on serine 142.

It belongs to the PAL/histidase family. Contains an active site 4-methylidene-imidazol-5-one (MIO), which is formed autocatalytically by cyclization and dehydration of residues Ala-Ser-Gly.

The protein resides in the cytoplasm. The catalysed reaction is L-histidine = trans-urocanate + NH4(+). Its pathway is amino-acid degradation; L-histidine degradation into L-glutamate; N-formimidoyl-L-glutamate from L-histidine: step 1/3. This chain is Histidine ammonia-lyase, found in Burkholderia cenocepacia (strain ATCC BAA-245 / DSM 16553 / LMG 16656 / NCTC 13227 / J2315 / CF5610) (Burkholderia cepacia (strain J2315)).